Here is a 580-residue protein sequence, read N- to C-terminus: High affinity choline transporter 1 (580 aa).

Over M1–E6 the chain is Extracellular. A helical membrane pass occupies residues G7 to W27. Residues K28–D48 lie on the Cytoplasmic side of the membrane. Residues I49–N69 form a helical membrane-spanning segment. The Extracellular portion of the chain corresponds to G70 to G81. A helical membrane pass occupies residues L82 to F102. Residues A103 to R125 are Cytoplasmic-facing. The chain crosses the membrane as a helical span at residues M126–F146. The Extracellular portion of the chain corresponds to S147–S164. Residues V165 to A185 traverse the membrane as a helical segment. Topologically, residues Y186–Q191 are cytoplasmic. A helical membrane pass occupies residues L192 to V212. The Extracellular portion of the chain corresponds to T213–V237. The helical transmembrane segment at Y238–F258 threads the bilayer. Residues Q259 to S274 are Cytoplasmic-facing. A helical transmembrane segment spans residues F275–G295. The Extracellular portion of the chain corresponds to A296–D317. N301 is a glycosylation site (N-linked (GlcNAc...) asparagine). The helical transmembrane segment at M318–G338 threads the bilayer. Residues A339–E376 are Cytoplasmic-facing. Residues I377 to L397 form a helical membrane-spanning segment. Residues L398–W406 lie on the Extracellular side of the membrane. Residues Y407–I427 traverse the membrane as a helical segment. The Cytoplasmic portion of the chain corresponds to K428 to A435. The helical transmembrane segment at V436–L456 threads the bilayer. Topologically, residues Q457–T481 are extracellular. A helical transmembrane segment spans residues L482 to F502. Residues F502–Q580 form a mediates interaction with SEC14L1 region. Over E503 to Q580 the chain is Cytoplasmic. The Dileucine-like motif motif lies at D527 to V532.

Belongs to the sodium:solute symporter (SSF) (TC 2.A.21) family. As to quaternary structure, homooligomerizes at cell surface. Interacts with SEC14L1; may regulate SLC5A7. Post-translationally, phosphorylated by PKC and dephosphorylated by PP1/PP2A. As to expression, found in spinal cord, brain-stem, mid-brain and striatum. Specific for cholinergic neurons.

Its subcellular location is the presynaptic cell membrane. The protein resides in the cell projection. It is found in the axon. The protein localises to the early endosome membrane. It localises to the cytoplasmic vesicle. Its subcellular location is the secretory vesicle. The protein resides in the synaptic vesicle membrane. The catalysed reaction is choline(out) + n Na(+)(out) = choline(in) + n Na(+)(in). With respect to regulation, choline uptake activity is regulated by SLC5A7/CHT1 internalization (inactive form) from the cell surface and recycling of internalized SLC5A7/CHT1 into the cell surface (active form). Activated by extracellular chloride ion. Specifically inhibited by nanomolar concentrations of hemicholinium 3. In terms of biological role, high-affinity Na(+)-coupled choline transmembrane symporter. Functions as an electrogenic, voltage-dependent transporter with variable charge/choline stoichiometry. Choline uptake and choline-induced current is also Cl(-)-dependent where Cl(-) is likely a regulatory ion rather than cotransported ion. Plays a critical role in acetylcholine (ACh) synthesis by taking up the substrate choline from the synaptic cleft into the presynaptic nerve terminals after neurotransmitter release. SLC5A7/CHT1-mediated choline high-affinity transport in cholinergic neurons is the rate-limiting step for production of ACh, thereby facilitating communication by subsequent action potentials. Localized predominantly in presynaptic terminal intracellular organelles, and translocated to the plasma membrane in active form in response to neuronal activity. The sequence is that of High affinity choline transporter 1 from Mus musculus (Mouse).